The sequence spans 223 residues: Transcriptional regulatory protein HprR (223 aa).

The 114-residue stretch at 2–115 (KILLIEDNQR…ELLARVRAQL (114 aa)) folds into the Response regulatory domain. D51 bears the 4-aspartylphosphate mark. The ompR/PhoB-type DNA-binding region spans 122 to 220 (NSTLEISGLR…IRGMGYSFVA (99 aa)).

Post-translationally, phosphorylated by HprS.

It is found in the cytoplasm. Functionally, member of a two-component regulatory system HprR/HprS involved in response to hydrogen peroxide. Regulates the expression of at least 5 operons, cyoABCDE, hprRS, hiuH, cusRS and cusCFBA. Bifunctional regulator that acts as an activator and a repressor. The chain is Transcriptional regulatory protein HprR from Escherichia coli (strain K12).